Consider the following 501-residue polypeptide: Endoglucanase 8 (501 aa).

The signal sequence occupies residues 1–35 (MKPRSSRDGHNAAAAAALLLAALVLSGDVLPAVVA). Catalysis depends on Asp95, which acts as the Nucleophile. N-linked (GlcNAc...) asparagine glycosylation is present at Asn298. Residue His414 is part of the active site. N-linked (GlcNAc...) asparagine glycosylation occurs at Asn462. Residue Asp465 is part of the active site. Residue Asn469 is glycosylated (N-linked (GlcNAc...) asparagine). Residue Glu474 is part of the active site.

It belongs to the glycosyl hydrolase 9 (cellulase E) family.

Its subcellular location is the secreted. The catalysed reaction is Endohydrolysis of (1-&gt;4)-beta-D-glucosidic linkages in cellulose, lichenin and cereal beta-D-glucans.. The protein is Endoglucanase 8 of Oryza sativa subsp. japonica (Rice).